A 323-amino-acid chain; its full sequence is Acetyl esterase (323 aa).

The short motif at 91 to 93 (HGG) is the Involved in the stabilization of the negatively charged intermediate by the formation of the oxyanion hole element. Residues serine 165, aspartate 262, and histidine 292 contribute to the active site.

It belongs to the 'GDXG' lipolytic enzyme family. In terms of assembly, homodimer. Interacts with MalT and MelA.

The protein localises to the cytoplasm. Functionally, displays esterase activity towards short chain fatty esters (acyl chain length of up to 8 carbons). Able to hydrolyze triacetylglycerol (triacetin) and tributyrylglycerol (tributyrin), but not trioleylglycerol (triolein) or cholesterol oleate. Negatively regulates MalT activity by antagonizing maltotriose binding. Inhibits MelA galactosidase activity. The chain is Acetyl esterase from Salmonella typhi.